Consider the following 98-residue polypeptide: Small ribosomal subunit protein uS19 (98 aa).

The segment at 74 to 98 (FAPTRNYRGHAGGKSEKGGSAPRKK) is disordered.

Belongs to the universal ribosomal protein uS19 family.

In terms of biological role, protein S19 forms a complex with S13 that binds strongly to the 16S ribosomal RNA. The sequence is that of Small ribosomal subunit protein uS19 from Chlorobium chlorochromatii (strain CaD3).